A 413-amino-acid chain; its full sequence is Serine/threonine transporter SstT (413 aa).

The next 8 membrane-spanning stretches (helical) occupy residues 19–39 (IFIGLILGLLVALVTPTLQNV), 61–81 (AVAPILIFVLVMAAIANKKIG), 89–109 (IIVLYLLGTFLAALSAVIAGF), 148–168 (ALFKANFVGVLAWSIGLGLAL), 189–209 (IVYVIIAFAPIGVFGLVSETL), 223–243 (LLAVLVGTMLFVAFVVNPILV), 297–317 (IPLGATINMAGAAITVTILTL), and 325–345 (IQISFFSALLLSVVASICACG).

The protein belongs to the dicarboxylate/amino acid:cation symporter (DAACS) (TC 2.A.23) family.

It localises to the cell inner membrane. It catalyses the reaction L-serine(in) + Na(+)(in) = L-serine(out) + Na(+)(out). The enzyme catalyses L-threonine(in) + Na(+)(in) = L-threonine(out) + Na(+)(out). Its function is as follows. Involved in the import of serine and threonine into the cell, with the concomitant import of sodium (symport system). The chain is Serine/threonine transporter SstT from Pasteurella multocida (strain Pm70).